Here is a 390-residue protein sequence, read N- to C-terminus: MEKDNGRQFTISQENWSLHRKGFQDQRRHQEKVRDAIKKNLPDLVSEENIVMSNGKDVIKIPIRSLDEYKIRYNYDKNQHVGQGKGDSKIGDIVARDPNGDKQAGAGKGSGAGDQAGEDYNEAEVSIVELEEMLFSELALPNLQKKEEQELVVEDIAFNDIRKKGLMGNVDKRRTILAAIKRNALNGKANIMPIYNDDLRFKTWTETIRPESKAVVIAMMDTSGSMGRFEKYMARSFFFWMTRFLRTKYETVEIEFIAHHTEAKVVSEEDFFSKGESGGTICSSAYRKALELIDEKYNPRAYNIYPFHFSDGDNLTSDNARCLKLVNQLMDRSNLFGYGEVNQYSRHSTLMSAYKNITDPRFMHYILKEKGDVYHALKFFFQKSAEEAPV.

2 disordered regions span residues 1 to 31 (MEKDNGRQFTISQENWSLHRKGFQDQRRHQE) and 81 to 118 (VGQGKGDSKIGDIVARDPNGDKQAGAGKGSGAGDQAGE). Residues 7 to 16 (RQFTISQENW) are compositionally biased toward polar residues. Basic and acidic residues-rich tracts occupy residues 22–31 (GFQDQRRHQE) and 86–100 (GDSKIGDIVARDPNG).

It belongs to the UPF0229 family.

The protein is UPF0229 protein ABC1477 of Shouchella clausii (strain KSM-K16) (Alkalihalobacillus clausii).